The following is a 66-amino-acid chain: Large ribosomal subunit protein bL31 (66 aa).

Zn(2+) is bound by residues Cys-16, Cys-18, Cys-36, and Cys-39.

Belongs to the bacterial ribosomal protein bL31 family. Type A subfamily. As to quaternary structure, part of the 50S ribosomal subunit. The cofactor is Zn(2+).

Functionally, binds the 23S rRNA. This chain is Large ribosomal subunit protein bL31, found in Nitratiruptor sp. (strain SB155-2).